Consider the following 222-residue polypeptide: Histidine biosynthesis bifunctional protein HisIE (222 aa).

The tract at residues Met-1–Ala-128 is phosphoribosyl-AMP cyclohydrolase. Positions Cys-129–Asn-222 are phosphoribosyl-ATP pyrophosphohydrolase.

The protein in the N-terminal section; belongs to the PRA-CH family. This sequence in the C-terminal section; belongs to the PRA-PH family.

The protein resides in the cytoplasm. The catalysed reaction is 1-(5-phospho-beta-D-ribosyl)-ATP + H2O = 1-(5-phospho-beta-D-ribosyl)-5'-AMP + diphosphate + H(+). It carries out the reaction 1-(5-phospho-beta-D-ribosyl)-5'-AMP + H2O = 1-(5-phospho-beta-D-ribosyl)-5-[(5-phospho-beta-D-ribosylamino)methylideneamino]imidazole-4-carboxamide. The protein operates within amino-acid biosynthesis; L-histidine biosynthesis; L-histidine from 5-phospho-alpha-D-ribose 1-diphosphate: step 2/9. Its pathway is amino-acid biosynthesis; L-histidine biosynthesis; L-histidine from 5-phospho-alpha-D-ribose 1-diphosphate: step 3/9. The polypeptide is Histidine biosynthesis bifunctional protein HisIE (Prochlorococcus marinus (strain MIT 9313)).